The primary structure comprises 395 residues: Vomeronasal type-1 receptor 2 (395 aa).

A helical transmembrane segment spans residues 12 to 32; the sequence is LYPINISAAWHLGPLPVSCFV. The Extracellular segment spans residues 33 to 51; sequence SNKYQCSLAFGATTGLRVL. The helical transmembrane segment at 52 to 72 threads the bilayer; sequence VVVVPQTQLSFLSSLCLVSLF. Residues 73–93 lie on the Cytoplasmic side of the membrane; that stretch reads LHSLVSAHGEKPTKPVGLDPT. Residues 94 to 114 traverse the membrane as a helical segment; sequence LFQVVVGILGNFSLLYYYMFL. Residues 115 to 170 lie on the Extracellular side of the membrane; the sequence is YFRGYKPRSTDLILRHLTVADSLVILSKRIPETMATFGLKHFDNYFGCKFLLYAHR. The chain crosses the membrane as a helical span at residues 171–191; sequence VGRGVSIGSTCLLSVFQVITI. The Cytoplasmic segment spans residues 192 to 208; it reads NPRNSRWAEMKVKAPTY. The chain crosses the membrane as a helical span at residues 209–229; it reads IGLSNILCWAFHMLVNAIFPI. At 230-267 the chain is on the extracellular side; that stretch reads YTTGKWSNNNITKKGDLGYCSAPLSDEVTKSVYAALTS. N-linked (GlcNAc...) asparagine glycosylation occurs at N239. The chain crosses the membrane as a helical span at residues 268–288; the sequence is FHDVLCLGLMLWASSSIVLVL. Residues 289 to 316 lie on the Cytoplasmic side of the membrane; sequence YRHKQQVQHICRNNLYPNSSPGNRAIQS. A helical membrane pass occupies residues 317–337; it reads ILALVSTFALCYALSFITYVY. At 338-346 the chain is on the extracellular side; sequence LALFDNSSW. N343 carries an N-linked (GlcNAc...) asparagine glycan. Residues 347 to 367 traverse the membrane as a helical segment; that stretch reads WLVNTAALIIACFPTISPFVL. The Cytoplasmic portion of the chain corresponds to 368–395; that stretch reads MCRDPSRSRLCSICCRRNRRFFHDFRKM.

The protein belongs to the G-protein coupled receptor 1 family.

The protein localises to the cell membrane. Functionally, putative pheromone receptor. The chain is Vomeronasal type-1 receptor 2 (VN1R2) from Homo sapiens (Human).